The chain runs to 529 residues: Type I inositol polyphosphate 5-phosphatase 5 (529 aa).

Catalytic regions lie at residues 371 to 386 (DRVL…VALT) and 451 to 466 (KRRT…WKGE).

It belongs to the inositol polyphosphate 5-phosphatase family.

In terms of biological role, may be involved in the regulation of root hairs development. Required for restricting both the size of the root-hair initiation site and the width of the root hairs during the transition to tip growth, but is not required for normal subsequent tip growth. The sequence is that of Type I inositol polyphosphate 5-phosphatase 5 from Arabidopsis thaliana (Mouse-ear cress).